The primary structure comprises 157 residues: Ribosomal RNA large subunit methyltransferase H (157 aa).

S-adenosyl-L-methionine contacts are provided by residues leucine 73, glycine 105, and 124–129; that span reads LSQMTF.

This sequence belongs to the RNA methyltransferase RlmH family. In terms of assembly, homodimer.

The protein resides in the cytoplasm. The catalysed reaction is pseudouridine(1915) in 23S rRNA + S-adenosyl-L-methionine = N(3)-methylpseudouridine(1915) in 23S rRNA + S-adenosyl-L-homocysteine + H(+). Functionally, specifically methylates the pseudouridine at position 1915 (m3Psi1915) in 23S rRNA. The sequence is that of Ribosomal RNA large subunit methyltransferase H from Flavobacterium psychrophilum (strain ATCC 49511 / DSM 21280 / CIP 103535 / JIP02/86).